The chain runs to 203 residues: Twist-related protein 1 (203 aa).

A compositionally biased stretch (low complexity) spans 1 to 18 (MMQDVSSSPVSPADDSLS). Positions 1–107 (MMQDVSSSPV…GGSPQSCEEL (107 aa)) are disordered. The span at 34–43 (RGGRKRRSSR) shows a compositional bias: basic residues. Gly residues-rich tracts occupy residues 46 to 65 (AGGG…GGDE) and 80 to 100 (GCGG…GGGS). Residues 109-160 (TQRVMANVRERQRTQSLNEPFAALRKIIPTLPSDKLSKIQTLKLAARYIDFL) enclose the bHLH domain. Residues 162 to 192 (RVLQSDELDSKTASCSYVAHEWLSYAFSVWR) form a sufficient for transactivation activity region.

As to quaternary structure, efficient DNA binding requires dimerization with another bHLH protein. Homodimer or heterodimer with E proteins such as TCF3. ID1 binds preferentially to TCF3 but does not interact efficiently with TWIST1 so ID1 levels control the amount of TCF3 available to dimerize with TWIST and thus determine the type of dimer formed.

It localises to the nucleus. Functionally, acts as a transcriptional regulator. Inhibits myogenesis by sequestrating E proteins, inhibiting trans-activation by MEF2, and inhibiting DNA-binding by MYOD1 through physical interaction. This interaction probably involves the basic domains of both proteins. Also represses expression of pro-inflammatory cytokines such as TNFA and IL1B. Regulates cranial suture patterning and fusion. Activates transcription as a heterodimer with E proteins. Regulates gene expression differentially, depending on dimer composition. Homodimers induce expression of FGFR2 and POSTN while heterodimers repress FGFR2 and POSTN expression and induce THBS1 expression. Heterodimerization is also required for osteoblast differentiation. Represses the activity of the circadian transcriptional activator: NPAS2-BMAL1 heterodimer. The chain is Twist-related protein 1 (TWIST1) from Gorilla gorilla gorilla (Western lowland gorilla).